We begin with the raw amino-acid sequence, 338 residues long: Ketol-acid reductoisomerase (NADP(+)) (338 aa).

The KARI N-terminal Rossmann domain maps to 1–181; it reads MNVFYDKDAD…GGGRAGIIET (181 aa). NADP(+) is bound by residues 24 to 27, R47, and S52; that span reads YGSQ. The active site involves H107. An NADP(+)-binding site is contributed by G133. Residues 182–327 enclose the KARI C-terminal knotted domain; the sequence is NFREETETDL…AKLRAMMPWI (146 aa). D190, E194, E226, and E230 together coordinate Mg(2+). S251 is a binding site for substrate.

Belongs to the ketol-acid reductoisomerase family. Mg(2+) serves as cofactor.

It catalyses the reaction (2R)-2,3-dihydroxy-3-methylbutanoate + NADP(+) = (2S)-2-acetolactate + NADPH + H(+). It carries out the reaction (2R,3R)-2,3-dihydroxy-3-methylpentanoate + NADP(+) = (S)-2-ethyl-2-hydroxy-3-oxobutanoate + NADPH + H(+). Its pathway is amino-acid biosynthesis; L-isoleucine biosynthesis; L-isoleucine from 2-oxobutanoate: step 2/4. It participates in amino-acid biosynthesis; L-valine biosynthesis; L-valine from pyruvate: step 2/4. Functionally, involved in the biosynthesis of branched-chain amino acids (BCAA). Catalyzes an alkyl-migration followed by a ketol-acid reduction of (S)-2-acetolactate (S2AL) to yield (R)-2,3-dihydroxy-isovalerate. In the isomerase reaction, S2AL is rearranged via a Mg-dependent methyl migration to produce 3-hydroxy-3-methyl-2-ketobutyrate (HMKB). In the reductase reaction, this 2-ketoacid undergoes a metal-dependent reduction by NADPH to yield (R)-2,3-dihydroxy-isovalerate. This Burkholderia cenocepacia (strain HI2424) protein is Ketol-acid reductoisomerase (NADP(+)).